The chain runs to 372 residues: MPMPDFQVSEPFTLGIELEMQVVNPPGYDLSQDSSTLIDAVKNQITAGEVKHDITESMLELATDVCRDINQAAGQFSAMQKVVLQAAADHHLEICGGGTHPFQKWQRQEVCDNERYQRTLENFGYLIQQATVFGQHVHVGCASGDDAIYLLHGLSRFVPHFIALSAASPYMQGTDTRFASSRPNIFSAFPDNGPMPWVSNWQQFETLFRCLSYTKMIDSIKDLHWDIRPSPHFGTVEVRVMDTPLTLSHAVNMAGLIQATAHWLLTERPFKHQEKDYLLYKFNRFQACRYGLEGVITDPHTGDRRPLTEDTLRLLEKIAPSADKIGASSAIEALHRQVVSGLNEAQLMRDFVADGGSLIGLVKKHCEIWAGE.

This sequence belongs to the glutamate--cysteine ligase type 2 family. YbdK subfamily. In terms of assembly, homodimer.

The catalysed reaction is L-cysteine + L-glutamate + ATP = gamma-L-glutamyl-L-cysteine + ADP + phosphate + H(+). ATP-dependent carboxylate-amine ligase which exhibits weak glutamate--cysteine ligase activity. In Escherichia fergusonii (strain ATCC 35469 / DSM 13698 / CCUG 18766 / IAM 14443 / JCM 21226 / LMG 7866 / NBRC 102419 / NCTC 12128 / CDC 0568-73), this protein is Putative glutamate--cysteine ligase 2 (ybdK).